A 66-amino-acid chain; its full sequence is Large ribosomal subunit protein bL33c (66 aa).

The protein belongs to the bacterial ribosomal protein bL33 family.

The protein resides in the plastid. Its subcellular location is the chloroplast. The protein is Large ribosomal subunit protein bL33c of Calycanthus floridus var. glaucus (Eastern sweetshrub).